The sequence spans 67 residues: Large ribosomal subunit protein bL35 (67 aa).

This sequence belongs to the bacterial ribosomal protein bL35 family.

This is Large ribosomal subunit protein bL35 from Synechocystis sp. (strain ATCC 27184 / PCC 6803 / Kazusa).